The following is a 101-amino-acid chain: ATP-dependent Clp protease adapter protein ClpS 2 (101 aa).

It belongs to the ClpS family. Binds to the N-terminal domain of the chaperone ClpA.

In terms of biological role, involved in the modulation of the specificity of the ClpAP-mediated ATP-dependent protein degradation. The polypeptide is ATP-dependent Clp protease adapter protein ClpS 2 (Mesorhizobium japonicum (strain LMG 29417 / CECT 9101 / MAFF 303099) (Mesorhizobium loti (strain MAFF 303099))).